The following is a 324-amino-acid chain: Probable peptidylglycine alpha-hydroxylating monooxygenase 1 (324 aa).

An N-terminal signal peptide occupies residues 1–22 (MPRFYLLSSCALLAFATSFCNA). 2 cysteine pairs are disulfide-bonded: Cys-41-Cys-85 and Cys-73-Cys-101. Residues His-66 and His-67 each contribute to the Cu cation site. Cu cation is bound at residue His-142. Asn-182 carries an N-linked (GlcNAc...) asparagine glycan. His-207, His-209, and Met-284 together coordinate Cu cation. Cys-264 and Cys-285 are oxidised to a cystine.

Belongs to the copper type II ascorbate-dependent monooxygenase family. It depends on Cu(2+) as a cofactor.

It is found in the secreted. The catalysed reaction is a [peptide]-C-terminal glycine + 2 L-ascorbate + O2 = a [peptide]-C-terminal (2S)-2-hydroxyglycine + 2 monodehydro-L-ascorbate radical + H2O. Monooxygenase that catalyzes an essential reaction in C-terminal alpha-amidation of peptides. Produces an unstable peptidyl(2-hydroxyglycine) intermediate. C-terminal amidation of peptides such as neuropeptides is essential for full biological activity. The sequence is that of Probable peptidylglycine alpha-hydroxylating monooxygenase 1 from Caenorhabditis elegans.